The sequence spans 325 residues: GTP 3',8-cyclase (325 aa).

The Radical SAM core domain occupies 4-219 (TYQREINYLR…DAISAKLGPL (216 aa)). Arginine 13 contacts GTP. Residues cysteine 20 and cysteine 24 each coordinate [4Fe-4S] cluster. Position 26 (tyrosine 26) interacts with S-adenosyl-L-methionine. Cysteine 27 contributes to the [4Fe-4S] cluster binding site. Arginine 63 lines the GTP pocket. Residue glycine 67 participates in S-adenosyl-L-methionine binding. A GTP-binding site is contributed by threonine 94. Serine 118 is an S-adenosyl-L-methionine binding site. GTP is bound at residue lysine 155. Methionine 189 lines the S-adenosyl-L-methionine pocket. 2 residues coordinate [4Fe-4S] cluster: cysteine 254 and cysteine 257. 259–261 (RLR) provides a ligand contact to GTP. A [4Fe-4S] cluster-binding site is contributed by cysteine 271.

This sequence belongs to the radical SAM superfamily. MoaA family. Monomer and homodimer. [4Fe-4S] cluster is required as a cofactor.

It carries out the reaction GTP + AH2 + S-adenosyl-L-methionine = (8S)-3',8-cyclo-7,8-dihydroguanosine 5'-triphosphate + 5'-deoxyadenosine + L-methionine + A + H(+). Its pathway is cofactor biosynthesis; molybdopterin biosynthesis. Its function is as follows. Catalyzes the cyclization of GTP to (8S)-3',8-cyclo-7,8-dihydroguanosine 5'-triphosphate. This is GTP 3',8-cyclase from Pelotomaculum thermopropionicum (strain DSM 13744 / JCM 10971 / SI).